The following is a 369-amino-acid chain: Capsid protein (369 aa).

It localises to the host nucleus. The protein resides in the virion. Its function is as follows. Self-assembles to form the virion icosahedral capsid. In Avon-Heathcote Estuary associated kieseladnavirus (AHEaBV), this protein is Capsid protein.